The sequence spans 297 residues: GTPase Era (297 aa).

Positions 3-171 (KSGFVSIVGR…IKVIQNYLEE (169 aa)) constitute an Era-type G domain. Positions 11–18 (GRPNVGKS) are G1. 11–18 (GRPNVGKS) serves as a coordination point for GTP. The tract at residues 37-41 (QTTRN) is G2. A G3 region spans residues 58–61 (DTPG). Residues 58–62 (DTPGI) and 120–123 (NKID) contribute to the GTP site. A G4 region spans residues 120-123 (NKID). The G5 stretch occupies residues 150–152 (ISA). In terms of domain architecture, KH type-2 spans 194 to 280 (IREKVLHYLN…NLQLWVKVKE (87 aa)).

This sequence belongs to the TRAFAC class TrmE-Era-EngA-EngB-Septin-like GTPase superfamily. Era GTPase family. As to quaternary structure, monomer.

The protein resides in the cytoplasm. The protein localises to the cell membrane. In terms of biological role, an essential GTPase that binds both GDP and GTP, with rapid nucleotide exchange. Plays a role in 16S rRNA processing and 30S ribosomal subunit biogenesis and possibly also in cell cycle regulation and energy metabolism. The protein is GTPase Era of Clostridioides difficile (strain 630) (Peptoclostridium difficile).